A 232-amino-acid chain; its full sequence is Sugar fermentation stimulation protein homolog (232 aa).

This sequence belongs to the SfsA family.

The sequence is that of Sugar fermentation stimulation protein homolog from Ruegeria sp. (strain TM1040) (Silicibacter sp.).